The primary structure comprises 283 residues: NAD kinase (283 aa).

The active-site Proton acceptor is the Asp66. Residues 66–67 (DG), 134–135 (ND), Arg145, Arg163, Asp165, and 176–181 (TAYSMS) each bind NAD(+).

It belongs to the NAD kinase family. It depends on a divalent metal cation as a cofactor.

It localises to the cytoplasm. The catalysed reaction is NAD(+) + ATP = ADP + NADP(+) + H(+). In terms of biological role, involved in the regulation of the intracellular balance of NAD and NADP, and is a key enzyme in the biosynthesis of NADP. Catalyzes specifically the phosphorylation on 2'-hydroxyl of the adenosine moiety of NAD to yield NADP. The polypeptide is NAD kinase (Chlorobaculum tepidum (strain ATCC 49652 / DSM 12025 / NBRC 103806 / TLS) (Chlorobium tepidum)).